Consider the following 124-residue polypeptide: Late histone H2A.2.1 (124 aa).

Positions 1 to 18 are enriched in basic residues; the sequence is MSGRGKGAKAKSKAKSRS. The interval 1 to 21 is disordered; sequence MSGRGKGAKAKSKAKSRSSRA. Ser-2 carries the N-acetylserine modification. The residue at position 2 (Ser-2) is a Phosphoserine. At Gln-104 the chain carries N5-methylglutamine. A Glycyl lysine isopeptide (Lys-Gly) (interchain with G-Cter in ubiquitin) cross-link involves residue Lys-119.

This sequence belongs to the histone H2A family. As to quaternary structure, the nucleosome is a histone octamer containing two molecules each of H2A, H2B, H3 and H4 assembled in one H3-H4 heterotetramer and two H2A-H2B heterodimers. The octamer wraps approximately 147 bp of DNA. Post-translationally, monoubiquitination of Lys-119 gives a specific tag for epigenetic transcriptional repression. In terms of processing, phosphorylation of Ser-2 directly represses transcription.

It localises to the nucleus. Its subcellular location is the chromosome. Core component of nucleosome. Nucleosomes wrap and compact DNA into chromatin, limiting DNA accessibility to the cellular machineries which require DNA as a template. Histones thereby play a central role in transcription regulation, DNA repair, DNA replication and chromosomal stability. DNA accessibility is regulated via a complex set of post-translational modifications of histones, also called histone code, and nucleosome remodeling. This is Late histone H2A.2.1 from Psammechinus miliaris (Green sea urchin).